The chain runs to 164 residues: UPF0561 protein C2orf68 homolog (164 aa).

Basic and acidic residues-rich tracts occupy residues 1–13 (MEVI…ESVK) and 35–49 (IARD…QAKE). The disordered stretch occupies residues 1–98 (MEVIRDGEGE…WNESSSGTEM (98 aa)). Over residues 50-64 (KQRRRHTNTPRRPRR) the composition is skewed to basic residues.

This sequence belongs to the UPF0561 family.

The polypeptide is UPF0561 protein C2orf68 homolog (Danio rerio (Zebrafish)).